A 405-amino-acid chain; its full sequence is uncharacterized protein (405 aa).

This is an uncharacterized protein from Schizosaccharomyces pombe (strain 972 / ATCC 24843) (Fission yeast).